A 308-amino-acid polypeptide reads, in one-letter code: Zinc finger CCCH domain-containing protein 15 (308 aa).

The interval 1 to 21 (MENKIAPFSYSGSSAGNSSSG) is disordered. Residues 9–21 (SYSGSSAGNSSSG) show a composition bias toward low complexity. Positions 56 to 91 (TRLHEASLEAEALRLENTELRSMNLRLKNELNSLIR) form a coiled coil. The tract at residues 110-190 (LSIGGNDADE…GTVTKPGTCG (81 aa)) is disordered. Serine 111 is subject to Phosphoserine. The span at 148-164 (RSSLPKSISVRSNGYSK) shows a compositional bias: polar residues. C3H1-type zinc fingers lie at residues 222–250 (MTKTELCNKWQETGTCPYGDHCQFAHGIK) and 260–288 (RYKTEVCRMVLAGDNCPYGHRCHFRHSLS).

In terms of processing, phosphorylated at Ser-111 by ASK7/BIN2 in the cytoplasm in the absence of brassinosteroids (BRs). In terms of tissue distribution, highly expressed in secondary cell wall-forming tissues and the xylem cells of roots. Expressed predominantly in inflorescence stems, flowers and siliques. Highly expressed in the basal portion of stems, where cells are undergoing secondary cell wall thickening. Highly expressed in meiocytes and tapetum from anthers.

Its subcellular location is the cytoplasm. It is found in the nucleus. Its function is as follows. Functions probably as a transcriptional factor that activates genes involved in secondary cell wall biosynthesis. Functions redudantly with C3H14 to regulate secondary cell wall formation. C3H14 and C3H15 have overlapping roles in the regulation of secondary cell wall formation and anther development. C3H14 may contribute more to secondary cell wall thickening while C3H15 could be more important in anther development. May regulate at both the transcriptional and post-transcriptional levels the expression of many genes involved in various biological processes, particularly those associated with cell wall metabolism and pollen development. Involved in the regulation of callose metabolism in male meiocytes, in integrity of newly formed microspores, and promotes male fertility. May be involved in the regulation of the callose synthesis genes CALS5 and CALS12, the potential degradation of callose walls-related genes A6 and MYB80, as well as other putative beta-1,3-glucanase genes. Negatively regulates cell elongation by inhibiting brassinosteroid (BR) signaling. Functions downstream of the BRI1 receptor as a negative regulator in the BR pathway. The sequence is that of Zinc finger CCCH domain-containing protein 15 from Arabidopsis thaliana (Mouse-ear cress).